A 360-amino-acid chain; its full sequence is Phospho-N-acetylmuramoyl-pentapeptide-transferase (360 aa).

10 consecutive transmembrane segments (helical) span residues 26-46, 72-92, 94-114, 132-152, 168-188, 199-219, 236-256, 263-283, 288-308, and 338-358; these read AIVS…RMIA, PTMG…LWAY, SNPY…IGFV, WKYF…YLAG, VMPQ…VGTG, GLAI…AWAT, AGEL…FLWF, VFMG…IAVL, FLLV…ILQV, and VIVR…ATLK.

Belongs to the glycosyltransferase 4 family. MraY subfamily. Mg(2+) serves as cofactor.

It localises to the cell inner membrane. The catalysed reaction is UDP-N-acetyl-alpha-D-muramoyl-L-alanyl-gamma-D-glutamyl-meso-2,6-diaminopimeloyl-D-alanyl-D-alanine + di-trans,octa-cis-undecaprenyl phosphate = di-trans,octa-cis-undecaprenyl diphospho-N-acetyl-alpha-D-muramoyl-L-alanyl-D-glutamyl-meso-2,6-diaminopimeloyl-D-alanyl-D-alanine + UMP. The protein operates within cell wall biogenesis; peptidoglycan biosynthesis. Functionally, catalyzes the initial step of the lipid cycle reactions in the biosynthesis of the cell wall peptidoglycan: transfers peptidoglycan precursor phospho-MurNAc-pentapeptide from UDP-MurNAc-pentapeptide onto the lipid carrier undecaprenyl phosphate, yielding undecaprenyl-pyrophosphoryl-MurNAc-pentapeptide, known as lipid I. The polypeptide is Phospho-N-acetylmuramoyl-pentapeptide-transferase (Klebsiella pneumoniae subsp. pneumoniae (strain ATCC 700721 / MGH 78578)).